Consider the following 118-residue polypeptide: Ribonuclease P protein component (118 aa).

The protein belongs to the RnpA family. Consists of a catalytic RNA component (M1 or rnpB) and a protein subunit.

It catalyses the reaction Endonucleolytic cleavage of RNA, removing 5'-extranucleotides from tRNA precursor.. RNaseP catalyzes the removal of the 5'-leader sequence from pre-tRNA to produce the mature 5'-terminus. It can also cleave other RNA substrates such as 4.5S RNA. The protein component plays an auxiliary but essential role in vivo by binding to the 5'-leader sequence and broadening the substrate specificity of the ribozyme. This Vibrio cholerae serotype O1 (strain ATCC 39541 / Classical Ogawa 395 / O395) protein is Ribonuclease P protein component.